The primary structure comprises 271 residues: Tryptophan synthase alpha chain (271 aa).

Active-site proton acceptor residues include E49 and D60.

This sequence belongs to the TrpA family. As to quaternary structure, tetramer of two alpha and two beta chains.

The catalysed reaction is (1S,2R)-1-C-(indol-3-yl)glycerol 3-phosphate + L-serine = D-glyceraldehyde 3-phosphate + L-tryptophan + H2O. It participates in amino-acid biosynthesis; L-tryptophan biosynthesis; L-tryptophan from chorismate: step 5/5. Functionally, the alpha subunit is responsible for the aldol cleavage of indoleglycerol phosphate to indole and glyceraldehyde 3-phosphate. This Rhizorhabdus wittichii (strain DSM 6014 / CCUG 31198 / JCM 15750 / NBRC 105917 / EY 4224 / RW1) (Sphingomonas wittichii) protein is Tryptophan synthase alpha chain.